The following is a 309-amino-acid chain: Protoheme IX farnesyltransferase (309 aa).

The next 9 helical transmembrane spans lie at 30–49 (VMSL…PGGV), 53–75 (IGFT…NMWY), 98–118 (AGEA…MLGL), 123–143 (VAAG…SMWL), 151–171 (IVIG…AVTG), 178–198 (VLMF…LALF), 224–244 (ILIY…TEVA), 247–267 (VYLI…YDIW), and 285–305 (VFKF…LDAI).

This sequence belongs to the UbiA prenyltransferase family. Protoheme IX farnesyltransferase subfamily. As to quaternary structure, interacts with CtaA.

It is found in the cell inner membrane. It carries out the reaction heme b + (2E,6E)-farnesyl diphosphate + H2O = Fe(II)-heme o + diphosphate. It participates in porphyrin-containing compound metabolism; heme O biosynthesis; heme O from protoheme: step 1/1. In terms of biological role, converts heme B (protoheme IX) to heme O by substitution of the vinyl group on carbon 2 of heme B porphyrin ring with a hydroxyethyl farnesyl side group. The protein is Protoheme IX farnesyltransferase of Jannaschia sp. (strain CCS1).